The primary structure comprises 450 residues: UDP-N-acetylmuramoylalanine--D-glutamate ligase (450 aa).

119–125 contributes to the ATP binding site; it reads GSNGKTT.

The protein belongs to the MurCDEF family.

Its subcellular location is the cytoplasm. The enzyme catalyses UDP-N-acetyl-alpha-D-muramoyl-L-alanine + D-glutamate + ATP = UDP-N-acetyl-alpha-D-muramoyl-L-alanyl-D-glutamate + ADP + phosphate + H(+). The protein operates within cell wall biogenesis; peptidoglycan biosynthesis. Its function is as follows. Cell wall formation. Catalyzes the addition of glutamate to the nucleotide precursor UDP-N-acetylmuramoyl-L-alanine (UMA). This Bacillus cereus (strain ATCC 14579 / DSM 31 / CCUG 7414 / JCM 2152 / NBRC 15305 / NCIMB 9373 / NCTC 2599 / NRRL B-3711) protein is UDP-N-acetylmuramoylalanine--D-glutamate ligase.